The sequence spans 353 residues: Holliday junction branch migration complex subunit RuvB (353 aa).

The interval 1–183 (MSGEGLVSAA…FGFTAHMDFY (183 aa)) is large ATPase domain (RuvB-L). Residues L22, R23, G64, K67, T68, S69, 130-132 (EDF), R173, Y183, and R220 contribute to the ATP site. T68 is a Mg(2+) binding site. Residues 184-254 (DAAELALVLT…VARAALRIYD (71 aa)) are small ATPAse domain (RuvB-S). Residues 257 to 353 (ALGLDRLDRA…ALFGEDLPAS (97 aa)) are head domain (RuvB-H). DNA-binding residues include R312 and R317.

This sequence belongs to the RuvB family. In terms of assembly, homohexamer. Forms an RuvA(8)-RuvB(12)-Holliday junction (HJ) complex. HJ DNA is sandwiched between 2 RuvA tetramers; dsDNA enters through RuvA and exits via RuvB. An RuvB hexamer assembles on each DNA strand where it exits the tetramer. Each RuvB hexamer is contacted by two RuvA subunits (via domain III) on 2 adjacent RuvB subunits; this complex drives branch migration. In the full resolvosome a probable DNA-RuvA(4)-RuvB(12)-RuvC(2) complex forms which resolves the HJ.

It is found in the cytoplasm. The enzyme catalyses ATP + H2O = ADP + phosphate + H(+). Its function is as follows. The RuvA-RuvB-RuvC complex processes Holliday junction (HJ) DNA during genetic recombination and DNA repair, while the RuvA-RuvB complex plays an important role in the rescue of blocked DNA replication forks via replication fork reversal (RFR). RuvA specifically binds to HJ cruciform DNA, conferring on it an open structure. The RuvB hexamer acts as an ATP-dependent pump, pulling dsDNA into and through the RuvAB complex. RuvB forms 2 homohexamers on either side of HJ DNA bound by 1 or 2 RuvA tetramers; 4 subunits per hexamer contact DNA at a time. Coordinated motions by a converter formed by DNA-disengaged RuvB subunits stimulates ATP hydrolysis and nucleotide exchange. Immobilization of the converter enables RuvB to convert the ATP-contained energy into a lever motion, pulling 2 nucleotides of DNA out of the RuvA tetramer per ATP hydrolyzed, thus driving DNA branch migration. The RuvB motors rotate together with the DNA substrate, which together with the progressing nucleotide cycle form the mechanistic basis for DNA recombination by continuous HJ branch migration. Branch migration allows RuvC to scan DNA until it finds its consensus sequence, where it cleaves and resolves cruciform DNA. This chain is Holliday junction branch migration complex subunit RuvB, found in Parafrankia sp. (strain EAN1pec).